The chain runs to 458 residues: MATRKAVRTAFEKCLLAVEPRSIVRNAISLNPSLLKIADYNYSLSNSTKIVVIAFGKASILMAKGARDQLKSSLLQKTIVIAPEQQKGIENELENDTEILYGARDNLPDEKSVFATRKVISEIRDFDSESTIFLFLISGGGSALLTSPSAPLDLAEKLETIRIMQAHGATIQELNTIRQNLSDVKGGKLLREIKKGCSIALIISDVIGNPVELIASGPTVIPAHQQDKFIISNILESLKINKLELPVNVKNVLENHEKEQLPENTSRFQNFIISSNNFALRAAAEYLTSSGYNSTIVTSSLSGNAAEIGKKFAEIITEKSITSSHLLKNSNLTIENYPIALLFGGETTVHLSENPGKGGRNQEMVLSCLDALKTRVPAHNFTFLSAGTDGQDGPTDAAGAIISNEDLPLNSLLNSSEFLQNSDSYNFWRQFKGGANHILTGPSGTNVMDIQILLLDQL.

This sequence belongs to the glycerate kinase type-2 family.

This is an uncharacterized protein from Caenorhabditis elegans.